Here is a 314-residue protein sequence, read N- to C-terminus: Palmitoyl-protein thioesterase 1 (314 aa).

An N-terminal signal peptide occupies residues 1-25 (MISICCSRFSCILFLLFLIFSLVLS). Cystine bridges form between cysteine 53–cysteine 54, cysteine 104–cysteine 136, and cysteine 160–cysteine 168. The Nucleophile role is filled by serine 123. Asparagine 240 carries an N-linked (GlcNAc...) asparagine glycan. Residues aspartate 241 and histidine 295 contribute to the active site.

Belongs to the palmitoyl-protein thioesterase family. In terms of tissue distribution, ubiquitously expressed.

The protein localises to the lysosome. It catalyses the reaction S-hexadecanoyl-L-cysteinyl-[protein] + H2O = L-cysteinyl-[protein] + hexadecanoate + H(+). Functionally, cleaves thioester-linked long fatty acyl groups such as palmitate from modified cysteine residues in proteins or peptides. The chain is Palmitoyl-protein thioesterase 1 (Ppt1) from Drosophila melanogaster (Fruit fly).